We begin with the raw amino-acid sequence, 131 residues long: Profilin-2 (131 aa).

A disulfide bond links C13 and C115. The Involved in PIP2 interaction signature appears at 81–97 (AVIRGKKGAGGITIKKT). T111 is modified (phosphothreonine).

The protein belongs to the profilin family. As to quaternary structure, occurs in many kinds of cells as a complex with monomeric actin in a 1:1 ratio. Phosphorylated by MAP kinases.

It is found in the cytoplasm. The protein resides in the cytoskeleton. In terms of biological role, binds to actin and affects the structure of the cytoskeleton. At high concentrations, profilin prevents the polymerization of actin, whereas it enhances it at low concentrations. By binding to PIP2, it inhibits the formation of IP3 and DG. The protein is Profilin-2 (PRO2) of Phleum pratense (Common timothy).